The chain runs to 384 residues: NAD-capped RNA hydrolase NPY1 (384 aa).

Residues Cys-179, Cys-182, Cys-197, and Cys-206 each coordinate Zn(2+). Residues 219-351 (PRTDPTVIIA…AGGYRVPFKN (133 aa)) form the Nudix hydrolase domain. Ala-256, Glu-272, Glu-276, and Glu-322 together coordinate Mg(2+). Residues 256–258 (AGF), Glu-272, Glu-276, and Glu-322 each bind substrate. The short motif at 257 to 278 (GFMEPSETIEEACIREIWEETG) is the Nudix box element. Residues 378–380 (KTS) carry the Microbody targeting signal motif.

This sequence belongs to the Nudix hydrolase family. NudC subfamily. As to quaternary structure, homodimer. Mg(2+) is required as a cofactor. Requires Zn(2+) as cofactor.

Its subcellular location is the peroxisome. It catalyses the reaction a 5'-end NAD(+)-phospho-ribonucleoside in mRNA + H2O = a 5'-end phospho-adenosine-phospho-ribonucleoside in mRNA + beta-nicotinamide D-ribonucleotide + 2 H(+). It carries out the reaction NAD(+) + H2O = beta-nicotinamide D-ribonucleotide + AMP + 2 H(+). The enzyme catalyses NADH + H2O = reduced beta-nicotinamide D-ribonucleotide + AMP + 2 H(+). Functionally, mRNA decapping enzyme that specifically removes the nicotinamide adenine dinucleotide (NAD) cap from a subset of mRNAs by hydrolyzing the diphosphate linkage to produce nicotinamide mononucleotide (NMN) and 5' monophosphate mRNA. The NAD-cap is present at the 5'-end of some RNAs; in contrast to the canonical N7 methylguanosine (m7G) cap, the NAD cap promotes mRNA decay. Mediates the hydrolysis of some nucleoside diphosphate derivatives. The protein is NAD-capped RNA hydrolase NPY1 of Saccharomyces cerevisiae (strain ATCC 204508 / S288c) (Baker's yeast).